The sequence spans 192 residues: MGTIKSGEIEKGSFLLFKGMPHIVLEREFSKMGRGGAIVRLKLKNLKNKSVVKETLKGADTVEEIEVLEVSSQYLYRDSENLIFMDLETYDQFNVNLREVPNIEDKVLFFQEAEVYSLVKWDNEVIDLKLPPKVAFEVVAAEAAVKGDTVTNAMKNVTLHTGLVVKAPLFINVGDKILVNSETKEYAERVKE.

The protein belongs to the elongation factor P family.

The protein resides in the cytoplasm. Its pathway is protein biosynthesis; polypeptide chain elongation. In terms of biological role, involved in peptide bond synthesis. Stimulates efficient translation and peptide-bond synthesis on native or reconstituted 70S ribosomes in vitro. Probably functions indirectly by altering the affinity of the ribosome for aminoacyl-tRNA, thus increasing their reactivity as acceptors for peptidyl transferase. The sequence is that of Elongation factor P from Borrelia hermsii (strain HS1 / DAH).